A 514-amino-acid chain; its full sequence is Maturase K (514 aa).

It belongs to the intron maturase 2 family. MatK subfamily.

The protein localises to the plastid. It localises to the chloroplast. Functionally, usually encoded in the trnK tRNA gene intron. Probably assists in splicing its own and other chloroplast group II introns. This is Maturase K from Phoenix dactylifera (Date palm).